Consider the following 476-residue polypeptide: 8-amino-7-oxononanoate synthase (476 aa).

A substrate-binding site is contributed by Arg24. Residue 171 to 172 (GF) coordinates pyridoxal 5'-phosphate. His210 contributes to the substrate binding site. Residues Ser260, 285–288 (DDAH), and 316–319 (TLSK) contribute to the pyridoxal 5'-phosphate site. N6-(pyridoxal phosphate)lysine is present on Lys319. Thr427 is a substrate binding site. Residues 474–476 (PKL) carry the Peroxisomal targeting signal PTS1 motif.

This sequence belongs to the class-II pyridoxal-phosphate-dependent aminotransferase family. BioF subfamily. As to quaternary structure, monomer. Pyridoxal 5'-phosphate is required as a cofactor.

It is found in the cytoplasm. It localises to the cytosol. Its subcellular location is the peroxisome. The catalysed reaction is 6-carboxyhexanoyl-[ACP] + L-alanine + H(+) = (8S)-8-amino-7-oxononanoate + holo-[ACP] + CO2. It participates in cofactor biosynthesis; biotin biosynthesis; 8-amino-7-oxononanoate from pimeloyl-CoA: step 1/1. In terms of biological role, catalyzes the decarboxylative condensation of pimeloyl-[acyl-carrier protein] and L-alanine to produce 8-amino-7-oxononanoate (AON), [acyl-carrier protein], and carbon dioxide. Required for the biosynthesis of D-biotin that prevents light-mediated cell death and modulates defense gene expression, probably by avoiding hydrogen peroxide H(2)O(2) accumulation. The protein is 8-amino-7-oxononanoate synthase of Arabidopsis thaliana (Mouse-ear cress).